The following is a 281-amino-acid chain: Octanoyl-[GcvH]:protein N-octanoyltransferase (281 aa).

Residues G44–T250 enclose the BPL/LPL catalytic domain. C149 serves as the catalytic Acyl-thioester intermediate.

The protein belongs to the octanoyltransferase LipL family.

It catalyses the reaction N(6)-octanoyl-L-lysyl-[glycine-cleavage complex H protein] + L-lysyl-[lipoyl-carrier protein] = N(6)-octanoyl-L-lysyl-[lipoyl-carrier protein] + L-lysyl-[glycine-cleavage complex H protein]. It participates in protein modification; protein lipoylation via endogenous pathway; protein N(6)-(lipoyl)lysine from octanoyl-[acyl-carrier-protein]. Its function is as follows. Catalyzes the amidotransfer (transamidation) of the octanoyl moiety from octanoyl-GcvH to the lipoyl domain of the E2 subunit of lipoate-dependent enzymes. This Bacillus anthracis protein is Octanoyl-[GcvH]:protein N-octanoyltransferase.